The following is a 296-amino-acid chain: Diaminopimelate epimerase (296 aa).

Residues Asn17, Gln49, and Asn69 each contribute to the substrate site. The active-site Proton donor is the Cys78. Substrate-binding positions include 79–80 (GN), Asn171, Asn205, and 223–224 (ER). Cys232 functions as the Proton acceptor in the catalytic mechanism. 233-234 (GT) serves as a coordination point for substrate.

Belongs to the diaminopimelate epimerase family. As to quaternary structure, homodimer.

The protein localises to the cytoplasm. It carries out the reaction (2S,6S)-2,6-diaminopimelate = meso-2,6-diaminopimelate. It participates in amino-acid biosynthesis; L-lysine biosynthesis via DAP pathway; DL-2,6-diaminopimelate from LL-2,6-diaminopimelate: step 1/1. Functionally, catalyzes the stereoinversion of LL-2,6-diaminopimelate (L,L-DAP) to meso-diaminopimelate (meso-DAP), a precursor of L-lysine and an essential component of the bacterial peptidoglycan. The protein is Diaminopimelate epimerase of Methylorubrum extorquens (strain PA1) (Methylobacterium extorquens).